The chain runs to 309 residues: Foldase protein PrsA (309 aa).

The signal sequence occupies residues 1–20; sequence MKKKIVAGAVTLLSVAVLAA. Residue Cys-21 is the site of N-palmitoyl cysteine attachment. Cys-21 is lipidated: S-diacylglycerol cysteine. Residues 144 to 241 enclose the PpiC domain; that stretch reads TPEVTAQIIK…ASYYIVKLVS (98 aa).

It belongs to the PrsA family.

Its subcellular location is the cell membrane. The catalysed reaction is [protein]-peptidylproline (omega=180) = [protein]-peptidylproline (omega=0). Its function is as follows. Plays a major role in protein secretion by helping the post-translocational extracellular folding of several secreted proteins. The polypeptide is Foldase protein PrsA (Streptococcus gordonii (strain Challis / ATCC 35105 / BCRC 15272 / CH1 / DL1 / V288)).